The chain runs to 333 residues: Ribosomal RNA small subunit methyltransferase H (333 aa).

S-adenosyl-L-methionine contacts are provided by residues 39 to 41 (GGY), Asp-57, Phe-84, Asp-101, and Gln-108.

It belongs to the methyltransferase superfamily. RsmH family.

It is found in the cytoplasm. The catalysed reaction is cytidine(1402) in 16S rRNA + S-adenosyl-L-methionine = N(4)-methylcytidine(1402) in 16S rRNA + S-adenosyl-L-homocysteine + H(+). Specifically methylates the N4 position of cytidine in position 1402 (C1402) of 16S rRNA. In Dinoroseobacter shibae (strain DSM 16493 / NCIMB 14021 / DFL 12), this protein is Ribosomal RNA small subunit methyltransferase H.